Reading from the N-terminus, the 558-residue chain is 2-isopropylmalate synthase (558 aa).

The Pyruvate carboxyltransferase domain maps to proline 28 to asparagine 304. Positions 37, 243, 245, and 279 each coordinate Mg(2+). The interval asparagine 438–lysine 558 is regulatory domain.

This sequence belongs to the alpha-IPM synthase/homocitrate synthase family. LeuA type 2 subfamily. In terms of assembly, homodimer. Mg(2+) is required as a cofactor.

It localises to the cytoplasm. The catalysed reaction is 3-methyl-2-oxobutanoate + acetyl-CoA + H2O = (2S)-2-isopropylmalate + CoA + H(+). It participates in amino-acid biosynthesis; L-leucine biosynthesis; L-leucine from 3-methyl-2-oxobutanoate: step 1/4. Its function is as follows. Catalyzes the condensation of the acetyl group of acetyl-CoA with 3-methyl-2-oxobutanoate (2-ketoisovalerate) to form 3-carboxy-3-hydroxy-4-methylpentanoate (2-isopropylmalate). The polypeptide is 2-isopropylmalate synthase (Clostridium acetobutylicum (strain ATCC 824 / DSM 792 / JCM 1419 / IAM 19013 / LMG 5710 / NBRC 13948 / NRRL B-527 / VKM B-1787 / 2291 / W)).